Reading from the N-terminus, the 435-residue chain is 5-methylthioadenosine/S-adenosylhomocysteine deaminase (435 aa).

Residues histidine 65 and histidine 67 each coordinate Zn(2+). Glutamate 94, arginine 150, and histidine 189 together coordinate substrate. Residue histidine 216 participates in Zn(2+) binding. Glutamate 219 and aspartate 304 together coordinate substrate. Aspartate 304 provides a ligand contact to Zn(2+).

Belongs to the metallo-dependent hydrolases superfamily. MTA/SAH deaminase family. Zn(2+) is required as a cofactor.

The catalysed reaction is S-adenosyl-L-homocysteine + H2O + H(+) = S-inosyl-L-homocysteine + NH4(+). It catalyses the reaction S-methyl-5'-thioadenosine + H2O + H(+) = S-methyl-5'-thioinosine + NH4(+). Catalyzes the deamination of 5-methylthioadenosine and S-adenosyl-L-homocysteine into 5-methylthioinosine and S-inosyl-L-homocysteine, respectively. Is also able to deaminate adenosine. This Bacillus cytotoxicus (strain DSM 22905 / CIP 110041 / 391-98 / NVH 391-98) protein is 5-methylthioadenosine/S-adenosylhomocysteine deaminase.